Consider the following 853-residue polypeptide: Eukaryotic translation initiation factor 3 subunit C (853 aa).

A disordered region spans residues 1–78 (MSRFFAASDS…EDEDQNKVLK (78 aa)). Residues 11–46 (SSEESSEEELYSDNEASAQEDSDKDSDDDDSDDDDS) show a composition bias toward acidic residues. The PCI domain occupies 599 to 773 (FHMHINLELL…SAIIFRKGVE (175 aa)). The segment at 798-853 (TLEQRTQGTANAFERQGGRGGRGGGRGRGGGRGGGVPRGGRNQQFTGGALGRAIQA) is disordered. Residues 815 to 835 (GRGGRGGGRGRGGGRGGGVPR) show a composition bias toward gly residues.

This sequence belongs to the eIF-3 subunit C family. In terms of assembly, component of the eukaryotic translation initiation factor 3 (eIF-3) complex.

The protein resides in the cytoplasm. In terms of biological role, component of the eukaryotic translation initiation factor 3 (eIF-3) complex, which is involved in protein synthesis of a specialized repertoire of mRNAs and, together with other initiation factors, stimulates binding of mRNA and methionyl-tRNAi to the 40S ribosome. The eIF-3 complex specifically targets and initiates translation of a subset of mRNAs involved in cell proliferation. This Phaeosphaeria nodorum (strain SN15 / ATCC MYA-4574 / FGSC 10173) (Glume blotch fungus) protein is Eukaryotic translation initiation factor 3 subunit C.